A 565-amino-acid chain; its full sequence is Periplasmic trehalase (565 aa).

The first 30 residues, 1–30 (MKSPAPSRPQKMALIPACIFLCFAALSVQA), serve as a signal peptide directing secretion. Substrate-binding positions include Arg152, 159–160 (WD), Asn196, 205–207 (RSQ), 277–279 (RPE), and Gly310. Residues Asp312 and Glu496 each act as proton donor/acceptor in the active site. Glu511 contributes to the substrate binding site. The segment at 540–565 (DNVPATHPTVKSATTQPSTKEAQPTP) is disordered. Residues 548–565 (TVKSATTQPSTKEAQPTP) show a composition bias toward polar residues.

It belongs to the glycosyl hydrolase 37 family. Monomer.

The protein localises to the periplasm. It carries out the reaction alpha,alpha-trehalose + H2O = alpha-D-glucose + beta-D-glucose. In terms of biological role, provides the cells with the ability to utilize trehalose at high osmolarity by splitting it into glucose molecules that can subsequently be taken up by the phosphotransferase-mediated uptake system. This Shigella flexneri protein is Periplasmic trehalase.